We begin with the raw amino-acid sequence, 243 residues long: Protein HUA2 (243 aa).

The protein resides in the cytoplasm. Functionally, may have a role in actin patch assembly. The sequence is that of Protein HUA2 (HUA2) from Saccharomyces cerevisiae (strain ATCC 204508 / S288c) (Baker's yeast).